The chain runs to 322 residues: Ribosomal RNA small subunit methyltransferase H (322 aa).

Residues 40-42 (GGH), Asp60, Phe84, Asp106, and Gln113 contribute to the S-adenosyl-L-methionine site.

The protein belongs to the methyltransferase superfamily. RsmH family.

Its subcellular location is the cytoplasm. The catalysed reaction is cytidine(1402) in 16S rRNA + S-adenosyl-L-methionine = N(4)-methylcytidine(1402) in 16S rRNA + S-adenosyl-L-homocysteine + H(+). Specifically methylates the N4 position of cytidine in position 1402 (C1402) of 16S rRNA. This is Ribosomal RNA small subunit methyltransferase H from Mannheimia succiniciproducens (strain KCTC 0769BP / MBEL55E).